We begin with the raw amino-acid sequence, 421 residues long: Histidine--tRNA ligase (421 aa).

This sequence belongs to the class-II aminoacyl-tRNA synthetase family. In terms of assembly, homodimer.

It localises to the cytoplasm. It catalyses the reaction tRNA(His) + L-histidine + ATP = L-histidyl-tRNA(His) + AMP + diphosphate + H(+). This is Histidine--tRNA ligase from Francisella tularensis subsp. holarctica (strain LVS).